Consider the following 202-residue polypeptide: UMP-CMP kinase 3 (202 aa).

Residue 24-29 (GSGKGT) participates in ATP binding. The interval 44–73 (SAGDLLRAEIKSGSENGTMIQNMIKEGKIV) is NMP. Residues arginine 50, 71-73 (KIV), and 98-101 (GFPR) contribute to the a ribonucleoside 5'-phosphate site. Asparagine 105 serves as a coordination point for CMP. The interval 136–144 (GRNQGREDD) is LID. Position 137 (arginine 137) interacts with ATP. Residues arginine 141 and arginine 152 each coordinate a ribonucleoside 5'-phosphate. Residue lysine 180 participates in ATP binding.

In terms of assembly, monomer. Requires Mg(2+) as cofactor.

The protein localises to the cytoplasm. Its subcellular location is the nucleus. The catalysed reaction is CMP + ATP = CDP + ADP. The enzyme catalyses dCMP + ATP = dCDP + ADP. It catalyses the reaction UMP + ATP = UDP + ADP. In terms of biological role, catalyzes the phosphorylation of pyrimidine nucleoside monophosphates at the expense of ATP. Plays an important role in de novo pyrimidine nucleotide biosynthesis. Has preference for UMP and CMP as phosphate acceptors. Does not act on dCMP and dUMP. The protein is UMP-CMP kinase 3 (UMK3) of Arabidopsis thaliana (Mouse-ear cress).